A 383-amino-acid polypeptide reads, in one-letter code: ATP phosphoribosyltransferase regulatory subunit (383 aa).

This sequence belongs to the class-II aminoacyl-tRNA synthetase family. HisZ subfamily. Heteromultimer composed of HisG and HisZ subunits.

The protein resides in the cytoplasm. The protein operates within amino-acid biosynthesis; L-histidine biosynthesis; L-histidine from 5-phospho-alpha-D-ribose 1-diphosphate: step 1/9. Required for the first step of histidine biosynthesis. May allow the feedback regulation of ATP phosphoribosyltransferase activity by histidine. In Neisseria gonorrhoeae (strain NCCP11945), this protein is ATP phosphoribosyltransferase regulatory subunit.